Consider the following 133-residue polypeptide: Small ribosomal subunit protein uS19 (133 aa).

Belongs to the universal ribosomal protein uS19 family.

Protein S19 forms a complex with S13 that binds strongly to the 16S ribosomal RNA. The protein is Small ribosomal subunit protein uS19 of Thermococcus sibiricus (strain DSM 12597 / MM 739).